Consider the following 109-residue polypeptide: Large ribosomal subunit protein uL22 (109 aa).

Belongs to the universal ribosomal protein uL22 family. Part of the 50S ribosomal subunit.

This protein binds specifically to 23S rRNA; its binding is stimulated by other ribosomal proteins, e.g. L4, L17, and L20. It is important during the early stages of 50S assembly. It makes multiple contacts with different domains of the 23S rRNA in the assembled 50S subunit and ribosome. Its function is as follows. The globular domain of the protein is located near the polypeptide exit tunnel on the outside of the subunit, while an extended beta-hairpin is found that lines the wall of the exit tunnel in the center of the 70S ribosome. This Wolinella succinogenes (strain ATCC 29543 / DSM 1740 / CCUG 13145 / JCM 31913 / LMG 7466 / NCTC 11488 / FDC 602W) (Vibrio succinogenes) protein is Large ribosomal subunit protein uL22.